We begin with the raw amino-acid sequence, 147 residues long: Cyanate hydratase (147 aa).

Active-site residues include R88, E91, and S114.

Belongs to the cyanase family.

The enzyme catalyses cyanate + hydrogencarbonate + 3 H(+) = NH4(+) + 2 CO2. Functionally, catalyzes the reaction of cyanate with bicarbonate to produce ammonia and carbon dioxide. This chain is Cyanate hydratase, found in Variovorax paradoxus (strain S110).